Reading from the N-terminus, the 96-residue chain is NADH-quinone oxidoreductase subunit K (96 aa).

Helical transmembrane passes span 1 to 21, 25 to 45, and 56 to 76; these read MNYI…VLVR, IIVF…FVAF, and VIAF…LAII.

This sequence belongs to the complex I subunit 4L family. As to quaternary structure, NDH-1 is composed of 14 different subunits. Subunits NuoA, H, J, K, L, M, N constitute the membrane sector of the complex.

It is found in the cell membrane. It carries out the reaction a quinone + NADH + 5 H(+)(in) = a quinol + NAD(+) + 4 H(+)(out). Its function is as follows. NDH-1 shuttles electrons from NADH, via FMN and iron-sulfur (Fe-S) centers, to quinones in the respiratory chain. The immediate electron acceptor for the enzyme in this species is believed to be a menaquinone. Couples the redox reaction to proton translocation (for every two electrons transferred, four hydrogen ions are translocated across the cytoplasmic membrane), and thus conserves the redox energy in a proton gradient. The protein is NADH-quinone oxidoreductase subunit K of Thermobifida fusca (strain YX).